Consider the following 254-residue polypeptide: 5-oxoprolinase subunit A (254 aa).

The protein belongs to the LamB/PxpA family. Forms a complex composed of PxpA, PxpB and PxpC.

The catalysed reaction is 5-oxo-L-proline + ATP + 2 H2O = L-glutamate + ADP + phosphate + H(+). Functionally, catalyzes the cleavage of 5-oxoproline to form L-glutamate coupled to the hydrolysis of ATP to ADP and inorganic phosphate. This Acinetobacter baumannii (strain AB307-0294) protein is 5-oxoprolinase subunit A.